The sequence spans 416 residues: Tyrosine permease (416 aa).

11 helical membrane-spanning segments follow: residues 13–33, 34–54, 86–106, 127–147, 153–173, 192–212, 231–251, 260–280, 286–306, 337–357, and 389–409; these read GTML…PIAM, AGIW…MMLL, VVVG…YISG, LSVI…SLLV, VLII…IWHV, LPYI…HGNV, IFIG…VTMG, PIIA…GLFT, LILT…ATLG, VVCF…GLAF, and ILNL…LDVF.

The protein belongs to the amino acid/polyamine transporter 2 family. Mtr/TnaB/TyrP permease subfamily.

Its subcellular location is the cell inner membrane. The sequence is that of Tyrosine permease (tutB) from Enterobacter agglomerans (Erwinia herbicola).